A 245-amino-acid polypeptide reads, in one-letter code: MSTNPKPTFRRILLKLSGEALMGEEGFGIDPKVLDRMAQEVKELVELGIQVGVVIGGGNLFRGEGLAKAGMNRVVGDHMGMLATVMNGLAMRDALHRAYVNARLMSAIPLKGVCDDYNWAEAISLLKSGRVVIFAAGTGNPFCTTDSAACLRGIEIEAEVVLKGTKVDGVYSDDPMKNPDAVKYDELSYSEILEKELKVMDLAAFTMARDHDMPILVFNMNKPGALRRVIMGEEEGTLIRAKKVI.

An ATP-binding site is contributed by 15 to 18 (KLSG). The interval 23-28 (GEEGFG) is involved in allosteric activation by GTP. Glycine 57 is a UMP binding site. 2 residues coordinate ATP: glycine 58 and arginine 62. UMP is bound by residues aspartate 77 and 138–145 (TGNPFCTT). The ATP site is built by threonine 165, tyrosine 171, and aspartate 174.

It belongs to the UMP kinase family. As to quaternary structure, homohexamer.

It is found in the cytoplasm. It carries out the reaction UMP + ATP = UDP + ADP. Its pathway is pyrimidine metabolism; CTP biosynthesis via de novo pathway; UDP from UMP (UMPK route): step 1/1. With respect to regulation, allosterically activated by GTP. Inhibited by UTP. Catalyzes the reversible phosphorylation of UMP to UDP. This is Uridylate kinase from Shewanella putrefaciens (strain CN-32 / ATCC BAA-453).